Here is a 488-residue protein sequence, read N- to C-terminus: Tyrosine-protein kinase Srms (488 aa).

Residues 51 to 112 (PFPQLFLALY…PITHVAKASP (62 aa)) enclose the SH3 domain. Positions 120–212 (WYFSGVSRTQ…LIQNPLLQPC (93 aa)) constitute an SH2 domain. The region spanning 230-488 (FALGRKLGEG…KLHAIHRCHP (259 aa)) is the Protein kinase domain. Residues 236-244 (LGEGYFGEV) and K258 contribute to the ATP site. Catalysis depends on D350, which acts as the Proton acceptor. The residue at position 380 (Y380) is a Phosphotyrosine; by autocatalysis.

This sequence belongs to the protein kinase superfamily. Tyr protein kinase family. SRC subfamily. Interacts (via the SH2 and SH3 domains) with DOK1. Interacts with KHDRBS1/SAM68 and VIM. In terms of tissue distribution, highly expressed in most breast cancers (at protein level).

The protein resides in the cytoplasm. It catalyses the reaction L-tyrosyl-[protein] + ATP = O-phospho-L-tyrosyl-[protein] + ADP + H(+). Non-receptor tyrosine-protein kinase which phosphorylates DOK1 on tyrosine residues. Also phosphorylates KHDRBS1/SAM68 and VIM on tyrosine residues. Phosphorylation of KHDRBS1 is EGF-dependent. Phosphorylates OTUB1, promoting deubiquitination of RPTOR. The polypeptide is Tyrosine-protein kinase Srms (SRMS) (Homo sapiens (Human)).